Here is a 109-residue protein sequence, read N- to C-terminus: Large ribosomal subunit protein eL30A (109 aa).

The protein belongs to the eukaryotic ribosomal protein eL30 family. As to quaternary structure, component of the large ribosomal subunit (LSU). Mature yeast ribosomes consist of a small (40S) and a large (60S) subunit. The 40S small subunit contains 1 molecule of ribosomal RNA (18S rRNA) and at least 33 different proteins. The large 60S subunit contains 3 rRNA molecules (25S, 5.8S and 5S rRNA) and at least 46 different proteins.

The protein resides in the cytoplasm. Functionally, component of the ribosome, a large ribonucleoprotein complex responsible for the synthesis of proteins in the cell. The small ribosomal subunit (SSU) binds messenger RNAs (mRNAs) and translates the encoded message by selecting cognate aminoacyl-transfer RNA (tRNA) molecules. The large subunit (LSU) contains the ribosomal catalytic site termed the peptidyl transferase center (PTC), which catalyzes the formation of peptide bonds, thereby polymerizing the amino acids delivered by tRNAs into a polypeptide chain. The nascent polypeptides leave the ribosome through a tunnel in the LSU and interact with protein factors that function in enzymatic processing, targeting, and the membrane insertion of nascent chains at the exit of the ribosomal tunnel. This is Large ribosomal subunit protein eL30A (rpl3001) from Schizosaccharomyces pombe (strain 972 / ATCC 24843) (Fission yeast).